A 333-amino-acid polypeptide reads, in one-letter code: DNA-directed RNA polymerase subunit alpha (333 aa).

Residues Met1 to Lys234 are alpha N-terminal domain (alpha-NTD). The interval Ile248 to Ala333 is alpha C-terminal domain (alpha-CTD).

The protein belongs to the RNA polymerase alpha chain family. As to quaternary structure, homodimer. The RNAP catalytic core consists of 2 alpha, 1 beta, 1 beta' and 1 omega subunit. When a sigma factor is associated with the core the holoenzyme is formed, which can initiate transcription.

The enzyme catalyses RNA(n) + a ribonucleoside 5'-triphosphate = RNA(n+1) + diphosphate. In terms of biological role, DNA-dependent RNA polymerase catalyzes the transcription of DNA into RNA using the four ribonucleoside triphosphates as substrates. The protein is DNA-directed RNA polymerase subunit alpha of Stutzerimonas stutzeri (strain A1501) (Pseudomonas stutzeri).